Consider the following 629-residue polypeptide: tRNA uridine 5-carboxymethylaminomethyl modification enzyme MnmG (629 aa).

13–18 (GGGHAG) lines the FAD pocket. NAD(+) is bound at residue 273-287 (GPRYCPSIEDKVMRF).

This sequence belongs to the MnmG family. Homodimer. Heterotetramer of two MnmE and two MnmG subunits. The cofactor is FAD.

The protein resides in the cytoplasm. In terms of biological role, NAD-binding protein involved in the addition of a carboxymethylaminomethyl (cmnm) group at the wobble position (U34) of certain tRNAs, forming tRNA-cmnm(5)s(2)U34. The polypeptide is tRNA uridine 5-carboxymethylaminomethyl modification enzyme MnmG (Photorhabdus laumondii subsp. laumondii (strain DSM 15139 / CIP 105565 / TT01) (Photorhabdus luminescens subsp. laumondii)).